Reading from the N-terminus, the 353-residue chain is Photosystem II protein D1 (353 aa).

Thr-2 is subject to N-acetylthreonine. A Phosphothreonine modification is found at Thr-2. A run of 3 helical transmembrane segments spans residues 29–46 (YIGW…TATS), 118–133 (HFLL…EWEL), and 142–156 (WIAV…AATA). Chlorophyll a is bound at residue His-118. Tyr-126 serves as a coordination point for pheophytin a. 2 residues coordinate [CaMn4O5] cluster: Asp-170 and Glu-189. A helical transmembrane segment spans residues 197 to 218 (FHMLGVAGVFGGSLFSAMHGSL). His-198 provides a ligand contact to chlorophyll a. Residues His-215 and 264–265 (SF) contribute to the a quinone site. His-215 is a Fe cation binding site. His-272 provides a ligand contact to Fe cation. Residues 274 to 288 (FLAAWPVVGIWFTAL) traverse the membrane as a helical segment. [CaMn4O5] cluster is bound by residues His-332, Glu-333, Asp-342, and Ala-344. Residues 345 to 353 (AVEAPSTNG) constitute a propeptide that is removed on maturation.

This sequence belongs to the reaction center PufL/M/PsbA/D family. In terms of assembly, PSII is composed of 1 copy each of membrane proteins PsbA, PsbB, PsbC, PsbD, PsbE, PsbF, PsbH, PsbI, PsbJ, PsbK, PsbL, PsbM, PsbT, PsbX, PsbY, PsbZ, Psb30/Ycf12, at least 3 peripheral proteins of the oxygen-evolving complex and a large number of cofactors. It forms dimeric complexes. It depends on The D1/D2 heterodimer binds P680, chlorophylls that are the primary electron donor of PSII, and subsequent electron acceptors. It shares a non-heme iron and each subunit binds pheophytin, quinone, additional chlorophylls, carotenoids and lipids. D1 provides most of the ligands for the Mn4-Ca-O5 cluster of the oxygen-evolving complex (OEC). There is also a Cl(-1) ion associated with D1 and D2, which is required for oxygen evolution. The PSII complex binds additional chlorophylls, carotenoids and specific lipids. as a cofactor. Post-translationally, tyr-161 forms a radical intermediate that is referred to as redox-active TyrZ, YZ or Y-Z. C-terminally processed by CTPA; processing is essential to allow assembly of the oxygen-evolving complex and thus photosynthetic growth.

The protein resides in the plastid. The protein localises to the chloroplast thylakoid membrane. The enzyme catalyses 2 a plastoquinone + 4 hnu + 2 H2O = 2 a plastoquinol + O2. Photosystem II (PSII) is a light-driven water:plastoquinone oxidoreductase that uses light energy to abstract electrons from H(2)O, generating O(2) and a proton gradient subsequently used for ATP formation. It consists of a core antenna complex that captures photons, and an electron transfer chain that converts photonic excitation into a charge separation. The D1/D2 (PsbA/PsbD) reaction center heterodimer binds P680, the primary electron donor of PSII as well as several subsequent electron acceptors. The polypeptide is Photosystem II protein D1 (Ceratophyllum demersum (Rigid hornwort)).